The sequence spans 86 residues: Large ribosomal subunit protein uL23 (86 aa).

This sequence belongs to the universal ribosomal protein uL23 family. In terms of assembly, part of the 50S ribosomal subunit. Contacts protein L29.

In terms of biological role, binds to 23S rRNA. One of the proteins that surrounds the polypeptide exit tunnel on the outside of the ribosome. This is Large ribosomal subunit protein uL23 from Methanococcus maripaludis (strain DSM 14266 / JCM 13030 / NBRC 101832 / S2 / LL).